Consider the following 860-residue polypeptide: Probable linoleate 9S-lipoxygenase 4 (860 aa).

A PLAT domain is found at N29–A159. Residues P162–I860 enclose the Lipoxygenase domain. Residues P209–E246 are disordered. H521, H526, H712, N716, and I860 together coordinate Fe cation.

The protein belongs to the lipoxygenase family. In terms of assembly, monomer. Fe cation is required as a cofactor. As to expression, expressed in tubers and roots. Not detected in leaves, flowers, stems, shoot tips, or axillary buds.

It localises to the cytoplasm. It carries out the reaction (9Z,12Z)-octadecadienoate + O2 = (9S)-hydroperoxy-(10E,12Z)-octadecadienoate. It functions in the pathway lipid metabolism; oxylipin biosynthesis. Plant lipoxygenases may be involved in a number of diverse aspects of plant physiology including growth and development, pest resistance, and senescence or responses to wounding. Catalyzes the hydroperoxidation of lipids containing a cis,cis-1,4-pentadiene structure. In Solanum tuberosum (Potato), this protein is Probable linoleate 9S-lipoxygenase 4 (LOX1.4).